Reading from the N-terminus, the 296-residue chain is Maltose/maltodextrin transport system permease protein MalG (296 aa).

Over 1–12 (MAMVQPKSQKAR) the chain is Cytoplasmic. The chain crosses the membrane as a helical span at residues 13 to 35 (LFITHLLLLLFIAAIMFPLLMVV). Topologically, residues 36 to 88 (AISLRQGNFATGSLIPEQISWDHWKLALGFSVEQADGRITPPPFPVLLWLWNS) are periplasmic. The ABC transmembrane type-1 domain occupies 85–281 (LWNSVKVAGI…LPITIVFLLA (197 aa)). Residues 89–111 (VKVAGISAIGIVALSTTCAYAFA) form a helical membrane-spanning segment. Residues 112–123 (RMRFPGKATLLK) lie on the Cytoplasmic side of the membrane. The chain crosses the membrane as a helical span at residues 124–143 (GMLIFQMFPAVLSLVALYAL). The Periplasmic portion of the chain corresponds to 144-152 (FDRLGEYIP). Residues 153–175 (FIGLNTHGGVIFAYLGGIALHVW) form a helical membrane-spanning segment. Residues 176–204 (TIKGYFETIDSSLEEAAALDGATPWQAFR) lie on the Cytoplasmic side of the membrane. Residues 205–227 (LVLLPLSVPILAVVFILSFIAAI) traverse the membrane as a helical segment. The Periplasmic portion of the chain corresponds to 228–257 (TEVPVASLLLRDVNSYTLAVGMQQYLNPQN). Residues 258–280 (YLWGDFAAAAVMSALPITIVFLL) traverse the membrane as a helical segment. Residues 281-296 (AQRWLVNGLTAGGVKG) lie on the Cytoplasmic side of the membrane.

This sequence belongs to the binding-protein-dependent transport system permease family. MalFG subfamily. In terms of assembly, the complex is composed of two ATP-binding proteins (MalK), two transmembrane proteins (MalG and MalF) and a solute-binding protein (MalE).

It localises to the cell inner membrane. In terms of biological role, part of the ABC transporter complex MalEFGK involved in maltose/maltodextrin import. Probably responsible for the translocation of the substrate across the membrane. This Escherichia coli O157:H7 protein is Maltose/maltodextrin transport system permease protein MalG (malG).